The sequence spans 395 residues: Probable L-tyrosine/L-aspartate decarboxylase (395 aa).

Lysine 242 carries the N6-(pyridoxal phosphate)lysine modification.

The protein belongs to the group II decarboxylase family. MfnA subfamily. The cofactor is pyridoxal 5'-phosphate.

The catalysed reaction is L-tyrosine + H(+) = tyramine + CO2. The enzyme catalyses L-aspartate + H(+) = beta-alanine + CO2. It participates in cofactor biosynthesis; methanofuran biosynthesis. It functions in the pathway cofactor biosynthesis; coenzyme A biosynthesis. Functionally, catalyzes the decarboxylation of L-tyrosine to produce tyramine for methanofuran biosynthesis. Can also catalyze the decarboxylation of L-aspartate to produce beta-alanine for coenzyme A (CoA) biosynthesis. In Methanosarcina barkeri (strain Fusaro / DSM 804), this protein is Probable L-tyrosine/L-aspartate decarboxylase.